The following is a 297-amino-acid chain: 4-hydroxy-tetrahydrodipicolinate synthase (297 aa).

Residue threonine 46 participates in pyruvate binding. Residue tyrosine 134 is the Proton donor/acceptor of the active site. Residue lysine 162 is the Schiff-base intermediate with substrate of the active site. Residue isoleucine 204 coordinates pyruvate.

It belongs to the DapA family. In terms of assembly, homotetramer; dimer of dimers.

Its subcellular location is the cytoplasm. It catalyses the reaction L-aspartate 4-semialdehyde + pyruvate = (2S,4S)-4-hydroxy-2,3,4,5-tetrahydrodipicolinate + H2O + H(+). Its pathway is amino-acid biosynthesis; L-lysine biosynthesis via DAP pathway; (S)-tetrahydrodipicolinate from L-aspartate: step 3/4. In terms of biological role, catalyzes the condensation of (S)-aspartate-beta-semialdehyde [(S)-ASA] and pyruvate to 4-hydroxy-tetrahydrodipicolinate (HTPA). In Stenotrophomonas maltophilia (strain K279a), this protein is 4-hydroxy-tetrahydrodipicolinate synthase.